The following is a 155-amino-acid chain: Probable methanogenesis regulatory protein FilR2 (155 aa).

Positions Ile-18–Lys-142 constitute a Response regulatory domain. The residue at position 75 (Asp-75) is a 4-aspartylphosphate.

In terms of processing, phosphorylated by FilI.

Functionally, member of the two-component regulatory system FilI/FilRs, which is involved in the regulation of methanogenesis. The chain is Probable methanogenesis regulatory protein FilR2 from Methanothrix harundinacea (strain 6Ac) (Methanosaeta harundinacea).